The primary structure comprises 487 residues: Betaine aldehyde dehydrogenase (487 aa).

Residues S26 and D93 each coordinate K(+). Position 150–152 (150–152 (GAW)) interacts with NAD(+). Residue K162 is the Charge relay system of the active site. NAD(+) contacts are provided by residues 176-179 (KPSE) and 229-232 (SVPT). L244 serves as a coordination point for K(+). The Proton acceptor role is filled by E250. Residues G252, C284, and E384 each contribute to the NAD(+) site. The active-site Nucleophile is the C284. At C284 the chain carries Cysteine sulfenic acid (-SOH). Residues K454 and G457 each coordinate K(+). E461 functions as the Charge relay system in the catalytic mechanism.

The protein belongs to the aldehyde dehydrogenase family. In terms of assembly, dimer of dimers. K(+) is required as a cofactor.

It catalyses the reaction betaine aldehyde + NAD(+) + H2O = glycine betaine + NADH + 2 H(+). Its pathway is amine and polyamine biosynthesis; betaine biosynthesis via choline pathway; betaine from betaine aldehyde: step 1/1. Functionally, involved in the biosynthesis of the osmoprotectant glycine betaine. Catalyzes the irreversible oxidation of betaine aldehyde to the corresponding acid. This Rhizobium leguminosarum bv. trifolii (strain WSM2304) protein is Betaine aldehyde dehydrogenase.